The primary structure comprises 805 residues: U-box domain-containing protein 70 (805 aa).

TPR repeat units follow at residues 15-48 (ARRE…DPRD), 49-82 (ISFL…GREL), 90-127 (ARAL…HYSE), 129-153 (TLAK…DQEA), 154-187 (ADHH…NPKD), 189-221 (RVFS…DPTF), and 222-255 (LKGY…DPNN). Residues 136-160 (AEEARKEIEERERLDQEAADHHRDR) form a disordered region. Residues 341–417 (RKETEESLSR…VREVEELRQK (77 aa)) adopt a coiled-coil conformation. The Protein kinase domain occupies 445–711 (FSNSLKIGEG…GEVWAIVEAI (267 aa)). ATP is bound by residues 451–459 (IGEGGFGCV) and K472. D567 (proton acceptor) is an active-site residue. Residues 730-804 (SPPSYFICPI…QEWLQQHSMS (75 aa)) enclose the U-box domain.

It belongs to the protein kinase superfamily. Ser/Thr protein kinase family. In terms of assembly, interacts with MODD.

The enzyme catalyses L-seryl-[protein] + ATP = O-phospho-L-seryl-[protein] + ADP + H(+). The catalysed reaction is L-threonyl-[protein] + ATP = O-phospho-L-threonyl-[protein] + ADP + H(+). It carries out the reaction S-ubiquitinyl-[E2 ubiquitin-conjugating enzyme]-L-cysteine + [acceptor protein]-L-lysine = [E2 ubiquitin-conjugating enzyme]-L-cysteine + N(6)-ubiquitinyl-[acceptor protein]-L-lysine.. The protein operates within protein modification; protein ubiquitination. Its function is as follows. Functions as an E3 ubiquitin ligase. Is recruited by MODD to promote ubiquitination of BZIP46, a positive regulator of abscisic acid (ABA) signaling and drought stress tolerance. The chain is U-box domain-containing protein 70 from Oryza sativa subsp. japonica (Rice).